The chain runs to 468 residues: Probable xyloglucan galactosyltransferase GT13 (468 aa).

At 1–18 (MDKFNPKKEKTVKKRALK) the chain is on the cytoplasmic side. A helical; Signal-anchor for type II membrane protein transmembrane segment spans residues 19–35 (VLTEISPTPLFSMLFLL). At 36–468 (HISQIATYLS…RVSLFKMTRI (433 aa)) the chain is on the lumenal side. N-linked (GlcNAc...) asparagine glycosylation is found at N53, N116, N153, N240, and N412.

It belongs to the glycosyltransferase 47 family. Expressed in roots, hypocotyls, cotyledons, leaves, stems, petals and carpels.

The protein localises to the golgi apparatus membrane. Functionally, functions in xyloglucan synthesis by adding side chains to the xylosylated glucan backbone. Involved in the galactosylation of hemicellulose xyloglucan. The protein is Probable xyloglucan galactosyltransferase GT13 of Arabidopsis thaliana (Mouse-ear cress).